We begin with the raw amino-acid sequence, 304 residues long: Putative S-adenosyl-L-methionine-dependent methyltransferase MAV_4444 (304 aa).

S-adenosyl-L-methionine contacts are provided by residues D130 and 159–160 (DL).

The protein belongs to the UPF0677 family.

Exhibits S-adenosyl-L-methionine-dependent methyltransferase activity. In Mycobacterium avium (strain 104), this protein is Putative S-adenosyl-L-methionine-dependent methyltransferase MAV_4444.